A 201-amino-acid polypeptide reads, in one-letter code: Imidazoleglycerol-phosphate dehydratase (201 aa).

Belongs to the imidazoleglycerol-phosphate dehydratase family.

Its subcellular location is the cytoplasm. The catalysed reaction is D-erythro-1-(imidazol-4-yl)glycerol 3-phosphate = 3-(imidazol-4-yl)-2-oxopropyl phosphate + H2O. It functions in the pathway amino-acid biosynthesis; L-histidine biosynthesis; L-histidine from 5-phospho-alpha-D-ribose 1-diphosphate: step 6/9. The chain is Imidazoleglycerol-phosphate dehydratase from Methanopyrus kandleri (strain AV19 / DSM 6324 / JCM 9639 / NBRC 100938).